Reading from the N-terminus, the 733-residue chain is Forkhead box protein K1 (733 aa).

An N-acetylalanine modification is found at Ala-2. The segment at 2 to 40 (AEVGEDSGARALLALRSAPCSPVLCAAAAAAAFPAAAPP) is interaction with SIN3A and SIN3B. Residues 36 to 79 (AAAPPPAPAQPQPPPGPPPPPPPPLPPGAIAGAGSSGGSSGVSG) form a disordered region. Residues 37–62 (AAPPPAPAQPQPPPGPPPPPPPPLPP) are compositionally biased toward pro residues. The required for interaction with FOXO4 and MEF2C stretch occupies residues 95 to 420 (AASVRQSPGP…PLSSRSAPAS (326 aa)). Ser-101 bears the Phosphoserine mark. Residues 123–175 (VTIGRNSSQGSVDLSMGLSSFISRRHLQLSFQEPHFYLRCLGKNGVFVDGAFQ) enclose the FHA domain. An omega-N-methylarginine mark is found at Arg-161 and Arg-191. Phosphoserine occurs at positions 213, 223, 239, and 243. Phosphothreonine occurs at positions 245 and 247. Phosphoserine occurs at positions 253, 257, 295, and 299. Disordered stretches follow at residues 287–306 (ASEQQADTSGGDSPKDESKP) and 413–436 (SSRSAPASPTHPGLMSPRSGGLQT). Positions 305-400 (KPPFSYAQLI…EQAFRKRRQR (96 aa)) form a DNA-binding region, fork-head. Phosphoserine occurs at positions 416 and 420. Residue Thr-422 is modified to Phosphothreonine. Ser-428 carries the post-translational modification Phosphoserine. Residue Thr-436 is modified to Phosphothreonine. Ser-441, Ser-445, and Ser-459 each carry phosphoserine. Residues 676 to 697 (VAATATTTPATATTASASASST) are compositionally biased toward low complexity. Residues 676 to 733 (VAATATTTPATATTASASASSTGEPEVKRSRVEEPSGAVTTPAGVIAAAGPQGPGTGE) form a disordered region. The segment covering 700-709 (PEVKRSRVEE) has biased composition (basic and acidic residues).

Interacts with SIN3A and SIN3B (via PAH2) to form a complex which represses transcription. Component of SIN3A-, but not SIN3B-, containing multiprotein complexes. Interacts with FOXO4 and MEF2C; both interactions inhibit FOXO4 and MEF2C transactivation activity. Interacts (when phosphorylated) with YWHAE/14-3-3-epsilon; promotes sequestration in the cytoplasm and leads to impaired ability to bind DNA. Interacts with FHL2. Interacts with SRF. Interacts with DVL2 and DVL3; the interaction induces DVL2 nuclear translocation. Interacts with BAP1 (when phosphorylated). Accessory component of the polycomb repressive deubiquitinase (PR-DUB) complex, at least composed of BAP1, one of ASXL1, ASXL2 or (probably) ASXL3 and one of MBD5 or MBD6. The PR-DUB core associates with a number of accessory proteins, including FOXK1, FOXK2, KDM1B, HCFC1 and OGT. Phosphorylation by GSK3 (GSK3A or GSK3B) promotes interaction with YWHAE/14-3-3-epsilon and retention in the cytoplasm. In response to mTORC1 signaling, phosphorylation by GSK3 is prevented, leading to translocation to the nucleus. In terms of tissue distribution, expressed both developing and adult tissues. In adults, significant expression is seen in tumors of the brain, colon and lymph node.

It is found in the nucleus. The protein resides in the cytoplasm. Its function is as follows. Transcriptional regulator involved in different processes such as glucose metabolism, aerobic glycolysis, muscle cell differentiation and autophagy. Recognizes and binds the forkhead DNA sequence motif (5'-GTAAACA-3') and can both act as a transcription activator or repressor, depending on the context. Together with FOXK2, acts as a key regulator of metabolic reprogramming towards aerobic glycolysis, a process in which glucose is converted to lactate in the presence of oxygen. Acts by promoting expression of enzymes for glycolysis (such as hexokinase-2 (HK2), phosphofructokinase, pyruvate kinase (PKLR) and lactate dehydrogenase), while suppressing further oxidation of pyruvate in the mitochondria by up-regulating pyruvate dehydrogenase kinases PDK1 and PDK4. Probably plays a role in gluconeogenesis during overnight fasting, when lactate from white adipose tissue and muscle is the main substrate. Involved in mTORC1-mediated metabolic reprogramming: in response to mTORC1 signaling, translocates into the nucleus and regulates the expression of genes associated with glycolysis and downstream anabolic pathways, such as HIF1A, thereby regulating glucose metabolism. Together with FOXK2, acts as a negative regulator of autophagy in skeletal muscle: in response to starvation, enters the nucleus, binds the promoters of autophagy genes and represses their expression, preventing proteolysis of skeletal muscle proteins. Acts as a transcriptional regulator of the myogenic progenitor cell population in skeletal muscle. Binds to the upstream enhancer region (CCAC box) of myoglobin (MB) gene, regulating the myogenic progenitor cell population. Promotes muscle progenitor cell proliferation by repressing the transcriptional activity of FOXO4, thereby inhibiting myogenic differentiation. Involved in remodeling processes of adult muscles that occur in response to physiological stimuli. Required to correct temporal orchestration of molecular and cellular events necessary for muscle repair. Represses myogenic differentiation by inhibiting MEFC activity. Positively regulates Wnt/beta-catenin signaling by translocating DVL into the nucleus. Reduces virus replication, probably by binding the interferon stimulated response element (ISRE) to promote antiviral gene expression. Accessory component of the polycomb repressive deubiquitinase (PR-DUB) complex; recruits the PR-DUB complex to specific FOXK1-bound genes. The sequence is that of Forkhead box protein K1 from Homo sapiens (Human).